We begin with the raw amino-acid sequence, 332 residues long: ADP-L-glycero-D-manno-heptose-6-epimerase (332 aa).

Residues 10–11 (FI), 31–32 (DD), Lys-38, 74–78 (QGACS), and Asn-91 each bind NADP(+). The active-site Proton acceptor is Tyr-138. An NADP(+)-binding site is contributed by Lys-142. Asn-167 lines the substrate pocket. The NADP(+) site is built by Val-168 and Lys-176. The active-site Proton acceptor is Lys-176. Residues Arg-178, His-185, 199-202 (FSGW), Arg-212, and Tyr-291 contribute to the substrate site.

Belongs to the NAD(P)-dependent epimerase/dehydratase family. HldD subfamily. As to quaternary structure, homopentamer. Requires NADP(+) as cofactor.

It catalyses the reaction ADP-D-glycero-beta-D-manno-heptose = ADP-L-glycero-beta-D-manno-heptose. The protein operates within nucleotide-sugar biosynthesis; ADP-L-glycero-beta-D-manno-heptose biosynthesis; ADP-L-glycero-beta-D-manno-heptose from D-glycero-beta-D-manno-heptose 7-phosphate: step 4/4. Catalyzes the interconversion between ADP-D-glycero-beta-D-manno-heptose and ADP-L-glycero-beta-D-manno-heptose via an epimerization at carbon 6 of the heptose. This is ADP-L-glycero-D-manno-heptose-6-epimerase from Bordetella avium (strain 197N).